The sequence spans 92 residues: Protamine-2 (92 aa).

Residues 1-76 (MVRCRVRSPS…RRACRHRRHR (76 aa)) are disordered. Low complexity predominate over residues 7-20 (RSPSESPQQGSGQQ). A phosphoserine mark is found at Ser8 and Ser10. Positions 21-36 (RENERQDQDQELRPED) are enriched in basic and acidic residues. Residues 42-76 (RTHRGRYHYRHRSHTRRRRSCRRRRRRACRHRRHR) are compositionally biased toward basic residues.

This sequence belongs to the protamine P2 family. Interacts with TDRP. Proteolytic processing into mature chains is required for histone eviction during spermatogenesis. Transition proteins (TNP1 and TNP2) are required for processing. In terms of tissue distribution, testis.

It is found in the nucleus. The protein localises to the chromosome. Protamines substitute for histones in the chromatin of sperm during the haploid phase of spermatogenesis. They compact sperm DNA into a highly condensed, stable and inactive complex. This is Protamine-2 (PRM2) from Sus scrofa (Pig).